Reading from the N-terminus, the 280-residue chain is MSALNLTVRVHPVVLFQVVDAYERRNADSHRVIGTLLGSVDKGVVEVTNCFCVPHKEHDDQVEAELSYALDMYDLNRKVNPNESVVGWWATGNDVTNHSSVIHEYYARECNNPVHLTVDTSLQGGRMGLRAYVCIQLGVPGGKSGCMFTPIPVELTSYEPETFGLKLLQKTVGVSPAHRPKTVPPMLDLAQISEASQKLQQLLDLILKYVDDVIAHKVTPDNAVGRQLLDLIHSVPHMTHEQFTQMFNANVRNLLLVITLSQLIKTQLQLNEKLTFLPSA.

Positions 8 to 138 constitute an MPN domain; it reads VRVHPVVLFQ…LRAYVCIQLG (131 aa).

Belongs to the eIF-3 subunit F family. As to quaternary structure, component of the eukaryotic translation initiation factor 3 (eIF-3) complex. The eIF-3 complex interacts with pix.

Its subcellular location is the cytoplasm. Functionally, component of the eukaryotic translation initiation factor 3 (eIF-3) complex, which is involved in protein synthesis of a specialized repertoire of mRNAs and, together with other initiation factors, stimulates binding of mRNA and methionyl-tRNAi to the 40S ribosome. The eIF-3 complex specifically targets and initiates translation of a subset of mRNAs involved in cell proliferation. The sequence is that of Eukaryotic translation initiation factor 3 subunit F-1 from Drosophila ananassae (Fruit fly).